We begin with the raw amino-acid sequence, 147 residues long: Large ribosomal subunit protein uL13 (147 aa).

This sequence belongs to the universal ribosomal protein uL13 family. In terms of assembly, part of the 50S ribosomal subunit.

In terms of biological role, this protein is one of the early assembly proteins of the 50S ribosomal subunit, although it is not seen to bind rRNA by itself. It is important during the early stages of 50S assembly. The sequence is that of Large ribosomal subunit protein uL13 from Leuconostoc mesenteroides subsp. mesenteroides (strain ATCC 8293 / DSM 20343 / BCRC 11652 / CCM 1803 / JCM 6124 / NCDO 523 / NBRC 100496 / NCIMB 8023 / NCTC 12954 / NRRL B-1118 / 37Y).